The primary structure comprises 189 residues: Accessory gene regulator protein B (189 aa).

5 helical membrane-spanning segments follow: residues 49–69 (IAYI…FYLI), 81–100 (SFWC…LVIV), 110–130 (IILT…ATKK), 143–163 (YYAI…KEPF), and 164–184 (AQFI…IFFI).

This sequence belongs to the AgrB family.

The protein resides in the cell membrane. Essential for the production of a quorum sensing system signal molecule, the autoinducing peptide (AIP). This quorum sensing system is responsible for the regulation of the expression of virulence factor genes. Involved in the proteolytic processing of AgrD, the precursor of AIP. This is Accessory gene regulator protein B from Staphylococcus aureus (strain COL).